The chain runs to 313 residues: Calcyphosin-2 (313 aa).

EF-hand domains lie at 144–179, 180–215, and 216–251; these read RILTGLGKYFQQLDKEGNGLLDKADFKQALKVFHLE, VSEKDFESAWLILDDNGNGKVDYGEFKRGIIGEMNE, and YRKSYVRKAFMKLDFNKTGSVPITNIRKCYCAKKHS. Residues Asp-193, Asn-195, Asn-197, Lys-199, and Glu-204 each contribute to the Ca(2+) site.

This is Calcyphosin-2 (CAPS2) from Macaca fascicularis (Crab-eating macaque).